The primary structure comprises 323 residues: Sodium/potassium-transporting ATPase subunit beta-2 (323 aa).

Residues 1-50 (MPTITEDCIDGFQQYYSRPPERPKKKSLKQMVYDSEDNSYFGRSMDSWAK) are Cytoplasmic-facing. A helical; Signal-anchor for type II membrane protein transmembrane segment spans residues 51–71 (IGIFYVAFYGVLAALVAICMW). Residues 72–323 (AFFQTLDPRI…GSVHYELLID (252 aa)) lie on the Extracellular side of the membrane. 2 disulfides stabilise this stretch: Cys153–Cys165 and Cys175–Cys189. N-linked (GlcNAc...) asparagine glycosylation is found at Asn180 and Asn206. Cys241 and Cys298 are disulfide-bonded.

The protein belongs to the X(+)/potassium ATPases subunit beta family. As to quaternary structure, the sodium/potassium-transporting ATPase is composed of a catalytic alpha subunit, an auxiliary non-catalytic beta subunit and an additional regulatory subunit. In embryos, it is expressed in the neurons of the CNS and PNS, in Garland cells and posterior spiracles. In adults, it shows a nervous system specific distribution: optic lobes, brain, thoracic ganglia and axonal pathways in the leg. Both isoforms concentrate in the adult head, isoform 2.2 being predominant. Both isoforms are weakly expressed in the thorax and very poorly expressed in the abdomen.

The protein localises to the cell membrane. Its function is as follows. This is the non-catalytic component of the active enzyme, which catalyzes the hydrolysis of ATP coupled with the exchange of Na(+) and K(+) ions across the plasma membrane. The beta subunit regulates, through assembly of alpha/beta heterodimers, the number of sodium pumps transported to the plasma membrane. The protein is Sodium/potassium-transporting ATPase subunit beta-2 (nrv2) of Drosophila melanogaster (Fruit fly).